The primary structure comprises 152 residues: Arginine repressor (152 aa).

It belongs to the ArgR family.

Its subcellular location is the cytoplasm. Its pathway is amino-acid biosynthesis; L-arginine biosynthesis [regulation]. Functionally, regulates arginine biosynthesis genes. This is Arginine repressor from Lactococcus lactis subsp. cremoris (strain MG1363).